A 222-amino-acid polypeptide reads, in one-letter code: N-(5'-phosphoribosyl)anthranilate isomerase (222 aa).

The protein belongs to the TrpF family.

It catalyses the reaction N-(5-phospho-beta-D-ribosyl)anthranilate = 1-(2-carboxyphenylamino)-1-deoxy-D-ribulose 5-phosphate. It participates in amino-acid biosynthesis; L-tryptophan biosynthesis; L-tryptophan from chorismate: step 3/5. This is N-(5'-phosphoribosyl)anthranilate isomerase from Rhizobium leguminosarum bv. trifolii (strain WSM2304).